Here is a 617-residue protein sequence, read N- to C-terminus: UvrABC system protein C (617 aa).

Positions 12 to 91 (EKPGVYLMKD…IKKYKPKYNV (80 aa)) constitute a GIY-YIG domain. Residues 203–238 (EWLVEKLKEEMQKAADELRFEEAARLRDQIFAIEKI) enclose the UVR domain.

It belongs to the UvrC family. In terms of assembly, interacts with UvrB in an incision complex.

Its subcellular location is the cytoplasm. Its function is as follows. The UvrABC repair system catalyzes the recognition and processing of DNA lesions. UvrC both incises the 5' and 3' sides of the lesion. The N-terminal half is responsible for the 3' incision and the C-terminal half is responsible for the 5' incision. This is UvrABC system protein C from Caldanaerobacter subterraneus subsp. tengcongensis (strain DSM 15242 / JCM 11007 / NBRC 100824 / MB4) (Thermoanaerobacter tengcongensis).